The chain runs to 233 residues: NAD(P)H-hydrate epimerase (233 aa).

The YjeF N-terminal domain maps to 15–218 (SQQFDVELMS…KLQEKYNFIV (204 aa)). 67 to 71 (NNGGD) contributes to the (6S)-NADPHX binding site. Positions 68 and 128 each coordinate K(+). (6S)-NADPHX is bound by residues 132–138 (GFSFKPP), tyrosine 143, and aspartate 161. Serine 164 provides a ligand contact to K(+).

It belongs to the NnrE/AIBP family. Requires K(+) as cofactor.

It carries out the reaction (6R)-NADHX = (6S)-NADHX. The catalysed reaction is (6R)-NADPHX = (6S)-NADPHX. Catalyzes the epimerization of the S- and R-forms of NAD(P)HX, a damaged form of NAD(P)H that is a result of enzymatic or heat-dependent hydration. This is a prerequisite for the S-specific NAD(P)H-hydrate dehydratase to allow the repair of both epimers of NAD(P)HX. The chain is NAD(P)H-hydrate epimerase from Paramecium tetraurelia.